A 194-amino-acid chain; its full sequence is N-acetyltransferase (194 aa).

Residues 9 to 173 (PQVRPGIAED…GRYWDVRWYE (165 aa)) form the N-acetyltransferase domain.

It belongs to the acetyltransferase family. PAT/BAR subfamily.

This chain is N-acetyltransferase (nat), found in Streptomyces griseus.